We begin with the raw amino-acid sequence, 115 residues long: Large ribosomal subunit protein eL30 (115 aa).

2 positions are modified to phosphoserine: Ser-10 and Ser-16. Residue Lys-26 is modified to N6-acetyllysine; alternate. A Glycyl lysine isopeptide (Lys-Gly) (interchain with G-Cter in SUMO2); alternate cross-link involves residue Lys-26.

The protein belongs to the eukaryotic ribosomal protein eL30 family. Component of the large ribosomal subunit.

It is found in the cytoplasm. Functionally, component of the large ribosomal subunit. The ribosome is a large ribonucleoprotein complex responsible for the synthesis of proteins in the cell. This chain is Large ribosomal subunit protein eL30 (RPL30), found in Homo sapiens (Human).